Here is a 292-residue protein sequence, read N- to C-terminus: 4-hydroxy-tetrahydrodipicolinate synthase (292 aa).

Thr-45 is a binding site for pyruvate. Tyr-133 serves as the catalytic Proton donor/acceptor. Lys-161 acts as the Schiff-base intermediate with substrate in catalysis. Ile-203 is a binding site for pyruvate.

It belongs to the DapA family. As to quaternary structure, homotetramer; dimer of dimers.

Its subcellular location is the cytoplasm. The catalysed reaction is L-aspartate 4-semialdehyde + pyruvate = (2S,4S)-4-hydroxy-2,3,4,5-tetrahydrodipicolinate + H2O + H(+). Its pathway is amino-acid biosynthesis; L-lysine biosynthesis via DAP pathway; (S)-tetrahydrodipicolinate from L-aspartate: step 3/4. Functionally, catalyzes the condensation of (S)-aspartate-beta-semialdehyde [(S)-ASA] and pyruvate to 4-hydroxy-tetrahydrodipicolinate (HTPA). The chain is 4-hydroxy-tetrahydrodipicolinate synthase from Escherichia fergusonii (strain ATCC 35469 / DSM 13698 / CCUG 18766 / IAM 14443 / JCM 21226 / LMG 7866 / NBRC 102419 / NCTC 12128 / CDC 0568-73).